Consider the following 33-residue polypeptide: Brevinin-2HSb (33 aa).

A disulfide bridge connects residues Cys27 and Cys33.

Expressed by the skin glands.

The protein localises to the secreted. In terms of biological role, has antibacterial activity against the Gram-positive bacterium S.aureus ATCC 25923 and the Gram-negative bacterium E.coli ATCC 25726. The chain is Brevinin-2HSb from Odorrana hosii (Hose's rock frog).